Here is a 422-residue protein sequence, read N- to C-terminus: Killer cell immunoglobulin-like receptor 3DL1 (422 aa).

Residues 1-21 (MMFEFLSLLCSGFFLVQRMSA) form the signal peptide. Topologically, residues 22-329 (HMGSYDKPFL…KNLHIQIGLL (308 aa)) are extracellular. 3 consecutive Ig-like C2-type domains span residues 42–100 (GQNV…HHQY), 135–202 (GENV…YNHS), and 237–300 (EQNM…FKNS). The N-linked (GlcNAc...) asparagine glycan is linked to Asn-44. Cys-49 and Cys-95 form a disulfide bridge. Asn-137 carries an N-linked (GlcNAc...) asparagine glycan. Cys-142 and Cys-195 are joined by a disulfide. Residues Asn-200 and Asn-239 are each glycosylated (N-linked (GlcNAc...) asparagine). Cys-244 and Cys-293 are oxidised to a cystine. N-linked (GlcNAc...) asparagine glycosylation is present at Asn-299. A helical transmembrane segment spans residues 330–350 (VTMVLVIVVIIIIIIIIIIII). Topologically, residues 351 to 422 (YYYYFSKKSS…DTVVYTEVMI (72 aa)) are cytoplasmic.

It belongs to the immunoglobulin superfamily.

The protein localises to the cell membrane. Functionally, receptor on natural killer (NK) cells. Inhibits the activity of NK cells thus preventing cell lysis. The sequence is that of Killer cell immunoglobulin-like receptor 3DL1 (Kir3dl1) from Rattus norvegicus (Rat).